A 437-amino-acid polypeptide reads, in one-letter code: Glycogen synthase (437 aa).

ADP-alpha-D-glucose is bound at residue Lys-15.

The protein belongs to the glycosyltransferase 1 family. Bacterial/plant glycogen synthase subfamily.

The enzyme catalyses [(1-&gt;4)-alpha-D-glucosyl](n) + ADP-alpha-D-glucose = [(1-&gt;4)-alpha-D-glucosyl](n+1) + ADP + H(+). It functions in the pathway glycan biosynthesis; glycogen biosynthesis. Synthesizes alpha-1,4-glucan chains using ADP-glucose. This Thermus thermophilus (strain ATCC 27634 / DSM 579 / HB8) protein is Glycogen synthase.